The chain runs to 399 residues: Putative 8-amino-7-oxononanoate synthase (399 aa).

R23 contacts substrate. 110 to 111 (GY) lines the pyridoxal 5'-phosphate pocket. H135 is a binding site for substrate. Residues S183, 208 to 211 (DEAH), and 239 to 242 (TLSK) contribute to the pyridoxal 5'-phosphate site. Position 242 is an N6-(pyridoxal phosphate)lysine (K242). T364 is a substrate binding site.

This sequence belongs to the class-II pyridoxal-phosphate-dependent aminotransferase family. BioF subfamily. Homodimer. Pyridoxal 5'-phosphate serves as cofactor.

It catalyses the reaction 6-carboxyhexanoyl-[ACP] + L-alanine + H(+) = (8S)-8-amino-7-oxononanoate + holo-[ACP] + CO2. It participates in cofactor biosynthesis; biotin biosynthesis. Catalyzes the decarboxylative condensation of pimeloyl-[acyl-carrier protein] and L-alanine to produce 8-amino-7-oxononanoate (AON), [acyl-carrier protein], and carbon dioxide. The protein is Putative 8-amino-7-oxononanoate synthase (bioF) of Cyanothece sp. (strain PCC 7425 / ATCC 29141).